The sequence spans 401 residues: CinA-like protein (401 aa).

This sequence belongs to the CinA family.

The polypeptide is CinA-like protein (Thermosipho melanesiensis (strain DSM 12029 / CIP 104789 / BI429)).